The sequence spans 55 residues: UPF0434 protein Erum1340/ERWE_CDS_01300 (55 aa).

This sequence belongs to the UPF0434 family.

This is UPF0434 protein Erum1340/ERWE_CDS_01300 from Ehrlichia ruminantium (strain Welgevonden).